Consider the following 381-residue polypeptide: MSMELFEVHEGKAKVLVPKAKTIYDSPVFYNPRMAPNRDVVVLLLNVLKPKIVLDALSATGIRGIRFALETPAEEIWMNDINELAYELMKKNVLLNFKGTLKENAKRAIFEGEKTIVINNDDANRLMAEKHRYFHFIDLDPFGSPMEFLDTALRSVKRKGILGVTATDGAPLCGAHPKACLRKYLAVPLRGELCHEVGTRILVGVIARYAAKYDLGMEVLLAYYKDHYFRAFVKLKDGAKKGDETLENLGYVYFDEKTGRFEVEKSFLSTRPNAYGPLWLGPLKNEKVVGEMLELLVSGFEVANYREVLKLLHMLHEELDIPLFYDTHALGKRLKIEPKKLGEIIKELKSMGYEATRTHFSPTGIKTNAPYEVFVEVMRKN.

The 373-residue stretch at 6-378 (FEVHEGKAKV…APYEVFVEVM (373 aa)) folds into the Trm1 methyltransferase domain. Residues arginine 38, arginine 63, aspartate 80, aspartate 122, and alanine 123 each contribute to the S-adenosyl-L-methionine site.

Belongs to the class I-like SAM-binding methyltransferase superfamily. Trm1 family. As to quaternary structure, monomer.

The catalysed reaction is guanosine(26) in tRNA + 2 S-adenosyl-L-methionine = N(2)-dimethylguanosine(26) in tRNA + 2 S-adenosyl-L-homocysteine + 2 H(+). Its function is as follows. Dimethylates a single guanine residue at position 26 of a number of tRNAs using S-adenosyl-L-methionine as donor of the methyl groups. In Pyrococcus furiosus (strain ATCC 43587 / DSM 3638 / JCM 8422 / Vc1), this protein is tRNA (guanine(26)-N(2))-dimethyltransferase.